A 111-amino-acid polypeptide reads, in one-letter code: uncharacterized protein (111 aa).

Residues 12–34 form a disordered region; sequence AWCPSRPPASAPSAPQEAARRGD. Positions 71–76 are required for interaction with PPP3CA; sequence PNIIIT. Thr-79 and Thr-81 each carry phosphothreonine.

As to quaternary structure, interacts (via PxIxIT motif, when phosphorylated on Thr-79) with PPP3CA.

This is an uncharacterized protein from Mus musculus (Mouse).